The chain runs to 541 residues: Carotenoid-cleaving dioxygenase, mitochondrial (541 aa).

Fe cation-binding residues include His188, His248, His319, and His535.

Belongs to the carotenoid oxygenase family. Fe(2+) is required as a cofactor. Widely expressed. Detected in heart, spleen, lung, intestine, colon, stomach, kidney, bladder, and prostate. Highly expressed in liver and testis (at protein level).

It localises to the mitochondrion. It carries out the reaction all-trans-beta-carotene + O2 = beta-ionone + all-trans-10'-apo-beta-carotenal. The enzyme catalyses 5-cis-lycopene + O2 = 5-cis-10'-apo-lycopenal + (3E,5E)-6,10-dimethylundeca-3,5,9-trien-2-one. It catalyses the reaction 13-cis-lycopene + O2 = 13-cis-10'-apo-lycopenal + (3E,5E)-6,10-dimethylundeca-3,5,9-trien-2-one. The catalysed reaction is lutein + O2 = (3R,6R)-hydroxy-alpha-ionone + (3R)-3-hydroxy-10'-apo-beta-carotenal. It carries out the reaction lutein + O2 = (3R,6R)-3-hydroxy-10'-apo-alpha-carotenal + (3R)-hydroxy-beta-ionone. The enzyme catalyses all-trans-zeaxanthin + 2 O2 = 4,9-dimethyldodeca-2,4,6,8,10-pentaenedial + 2 (3R)-hydroxy-beta-ionone. It catalyses the reaction all-trans-zeaxanthin + O2 = (3R)-3-hydroxy-10'-apo-beta-carotenal + (3R)-hydroxy-beta-ionone. The catalysed reaction is beta-cryptoxanthin + O2 = all-trans-10'-apo-beta-carotenal + (3R)-hydroxy-beta-ionone. It carries out the reaction all-trans-10'-apo-beta-carotenal + O2 = beta-ionone + 4,9-dimethyldodeca-2,4,6,8,10-pentaenedial. The enzyme catalyses (3R)-3-hydroxy-10'-apo-beta-carotenal + O2 = 4,9-dimethyldodeca-2,4,6,8,10-pentaenedial + (3R)-hydroxy-beta-ionone. It catalyses the reaction (3R,6R)-3-hydroxy-10'-apo-alpha-carotenal + O2 = (3R,6R)-hydroxy-alpha-ionone + 4,9-dimethyldodeca-2,4,6,8,10-pentaenedial. Broad specificity mitochondrial dioxygenase that mediates the asymmetric oxidative cleavage of carotenoids. Cleaves carotenes (pure hydrocarbon carotenoids) such as all-trans-beta-carotene and lycopene as well as xanthophylls (oxygenated carotenoids) such as zeaxanthin, lutein and beta-cryptoxanthin at both the 9,10 and the 9',10' carbon-carbon double bond. Through its function in carotenoids metabolism regulates oxidative stress and the production of important signaling molecules. The protein is Carotenoid-cleaving dioxygenase, mitochondrial of Mustela putorius furo (European domestic ferret).